A 509-amino-acid chain; its full sequence is MGTRSVALVLLAAVLLQALLPASAAEGLVRIALKKRPIDENSRVAARLSGEEGARRLGLRGANSLGGGGGEGDIVALKNYMNAQYFGEIGVGTPPQKFTVIFDTGSSNLWVPSAKCYFSIACFFHSRYKSGQSSTYQKNGKPAAIQYGTGSIAGFFSEDSVTVGDLVVKDQEFIEATKEPGLTFMVAKFDGILGLGFQEISVGDAVPVWYKMVEQGLVSEPVFSFWFNRHSDEGEGGEIVFGGMDPSHYKGNHTYVPVSQKGYWQFEMGDVLIGGKTTGFCASGCSAIADSGTSLLAGPTAIITEINEKIGATGVVSQECKTVVSQYGQQILDLLLAETQPSKICSQVGLCTFDGKHGVSAGIKSVVDDEAGESNGLQSGPMCNACEMAVVWMQNQLAQNKTQDLILNYINQLCDKLPSPMGESSVDCGSLASMPEISFTIGGKKFALKPEEYILKVGEGAAAQCISGFTAMDIPPPRGPLWILGDVFMGAYHTVFDYGKMRVGFAKSA.

Positions 1-24 (MGTRSVALVLLAAVLLQALLPASA) are cleaved as a signal peptide. A propeptide spans 25–67 (AEGLVRIALKKRPIDENSRVAARLSGEEGARRLGLRGANSLGG) (activation peptide). The Peptidase A1 domain occupies 85 to 506 (YFGEIGVGTP…DYGKMRVGFA (422 aa)). Residue Asp103 is part of the active site. Cysteines 116 and 122 form a disulfide. N-linked (GlcNAc...) asparagine glycosylation occurs at Asn252. The cysteines at positions 281 and 285 are disulfide-linked. The active site involves Asp290. Positions 315–420 (VVSQECKTVV…NQLCDKLPSP (106 aa)) constitute a Saposin B-type domain. Disulfide bonds link Cys320–Cys414, Cys345–Cys386, Cys351–Cys383, and Cys428–Cys465. Asn400 carries an N-linked (GlcNAc...) asparagine glycan.

Belongs to the peptidase A1 family.

The protein localises to the vacuole. Involved in the breakdown of propeptides of storage proteins in protein-storage vacuoles. The protein is Aspartic proteinase oryzasin-1 of Oryza sativa subsp. japonica (Rice).